Here is a 118-residue protein sequence, read N- to C-terminus: uncharacterized protein (118 aa).

This is an uncharacterized protein from Methanocaldococcus jannaschii (strain ATCC 43067 / DSM 2661 / JAL-1 / JCM 10045 / NBRC 100440) (Methanococcus jannaschii).